Reading from the N-terminus, the 594-residue chain is Proline--tRNA ligase (594 aa).

The protein belongs to the class-II aminoacyl-tRNA synthetase family. ProS type 1 subfamily. In terms of assembly, homodimer.

The protein resides in the cytoplasm. The enzyme catalyses tRNA(Pro) + L-proline + ATP = L-prolyl-tRNA(Pro) + AMP + diphosphate. In terms of biological role, catalyzes the attachment of proline to tRNA(Pro) in a two-step reaction: proline is first activated by ATP to form Pro-AMP and then transferred to the acceptor end of tRNA(Pro). As ProRS can inadvertently accommodate and process non-cognate amino acids such as alanine and cysteine, to avoid such errors it has two additional distinct editing activities against alanine. One activity is designated as 'pretransfer' editing and involves the tRNA(Pro)-independent hydrolysis of activated Ala-AMP. The other activity is designated 'posttransfer' editing and involves deacylation of mischarged Ala-tRNA(Pro). The misacylated Cys-tRNA(Pro) is not edited by ProRS. The sequence is that of Proline--tRNA ligase from Synechococcus sp. (strain WH7803).